Reading from the N-terminus, the 239-residue chain is Transcriptional activatory protein AadR (239 aa).

Residue 27–149 coordinates a nucleoside 3',5'-cyclic phosphate; the sequence is ICGELGPADH…FATRELSLAQ (123 aa). In terms of domain architecture, HTH crp-type spans 158–231; that stretch reads RSAEEKVAAF…PDGVRVLDPK (74 aa). The H-T-H motif DNA-binding region spans 191–210; that stretch reads RQDIADFLGLTIETVSRTFT.

In terms of biological role, transcriptional activator of anaerobic gene expression. For aromatic acid degradation. Also required for the anaerobic degradation of benzoate. The chain is Transcriptional activatory protein AadR (aadR) from Rhodopseudomonas palustris (strain ATCC BAA-98 / CGA009).